We begin with the raw amino-acid sequence, 500 residues long: Amino-acid acetyltransferase, mitochondrial (500 aa).

A mitochondrion-targeting transit peptide spans M1–S19. Residues F336–P496 enclose the N-acetyltransferase domain.

The protein belongs to the acetyltransferase family.

Its subcellular location is the mitochondrion. The catalysed reaction is L-glutamate + acetyl-CoA = N-acetyl-L-glutamate + CoA + H(+). The protein operates within amino-acid biosynthesis; L-arginine biosynthesis; N(2)-acetyl-L-ornithine from L-glutamate: step 1/4. Its function is as follows. N-acetylglutamate synthase involved in arginine biosynthesis. This Schizosaccharomyces pombe (strain 972 / ATCC 24843) (Fission yeast) protein is Amino-acid acetyltransferase, mitochondrial (arg6).